The primary structure comprises 205 residues: Thymidylate kinase (205 aa).

ATP is bound at residue 11–18 (GVEGAGKS).

Belongs to the thymidylate kinase family.

It catalyses the reaction dTMP + ATP = dTDP + ADP. Phosphorylation of dTMP to form dTDP in both de novo and salvage pathways of dTTP synthesis. In Vesicomyosocius okutanii subsp. Calyptogena okutanii (strain HA), this protein is Thymidylate kinase.